Consider the following 471-residue polypeptide: Intraflagellar transport protein 46 homolog (471 aa).

Disordered stretches follow at residues 1–202 and 226–246; these read MSSE…SNMR and SRLEDDSSNDDDDDDDDEDDD. Acidic residues-rich tracts occupy residues 89 to 99 and 231 to 246; these read SEPQEVIDVND and DSSNDDDDDDDDEDDD.

This sequence belongs to the IFT46 family. As to quaternary structure, component of the IFT complex B composed of at least che-2, che-13, dyf-1, dyf-3, dyf-6, dyf-11, dyf-13, ift-20, ift-74, ift-81, ifta-2, osm-1, osm-5 and osm-6. Expressed in the hypodermis and sensory neurons including inner labial, PDE, amphid and phasmid neurons.

It is found in the cell projection. It localises to the cilium. The protein localises to the cytoplasm. The protein resides in the cytoskeleton. Its subcellular location is the cilium basal body. It is found in the dendrite. It localises to the perikaryon. Its function is as follows. Component of the intraflagellar transport (IFT) complex B required for transport of proteins in the motile cilium. May be required for ciliary entrance and transport of specific ciliary cargo proteins such as che-3 which are related to motility. Required for normal morphology and function of ciliated amphid sensory neurons. In Caenorhabditis elegans, this protein is Intraflagellar transport protein 46 homolog.